The following is a 353-amino-acid chain: Probable dual-specificity RNA methyltransferase RlmN (353 aa).

Glutamate 90 serves as the catalytic Proton acceptor. One can recognise a Radical SAM core domain in the interval 96-326 (YKHGNSICIS…VTTRREMGSD (231 aa)). Cysteine 103 and cysteine 331 are joined by a disulfide. Residues cysteine 110, cysteine 114, and cysteine 117 each contribute to the [4Fe-4S] cluster site. S-adenosyl-L-methionine-binding positions include 157–158 (GE), serine 189, 212–214 (SLH), and asparagine 288. The active-site S-methylcysteine intermediate is cysteine 331.

It belongs to the radical SAM superfamily. RlmN family. The cofactor is [4Fe-4S] cluster.

It localises to the cytoplasm. The enzyme catalyses adenosine(2503) in 23S rRNA + 2 reduced [2Fe-2S]-[ferredoxin] + 2 S-adenosyl-L-methionine = 2-methyladenosine(2503) in 23S rRNA + 5'-deoxyadenosine + L-methionine + 2 oxidized [2Fe-2S]-[ferredoxin] + S-adenosyl-L-homocysteine. It carries out the reaction adenosine(37) in tRNA + 2 reduced [2Fe-2S]-[ferredoxin] + 2 S-adenosyl-L-methionine = 2-methyladenosine(37) in tRNA + 5'-deoxyadenosine + L-methionine + 2 oxidized [2Fe-2S]-[ferredoxin] + S-adenosyl-L-homocysteine. In terms of biological role, specifically methylates position 2 of adenine 2503 in 23S rRNA and position 2 of adenine 37 in tRNAs. This Clostridium beijerinckii (strain ATCC 51743 / NCIMB 8052) (Clostridium acetobutylicum) protein is Probable dual-specificity RNA methyltransferase RlmN.